Reading from the N-terminus, the 148-residue chain is Transcriptional repressor NrdR (148 aa).

A disordered region spans residues 1–22 (MKCPYCSAPDSKVVNSRPSDDG). A zinc finger lies at 3–34 (CPYCSAPDSKVVNSRPSDDGASIRRRRECLNC). The 88-residue stretch at 49-136 (LMVVKRSGPR…VYRDFDSLER (88 aa)) folds into the ATP-cone domain.

Belongs to the NrdR family. Zn(2+) is required as a cofactor.

Negatively regulates transcription of bacterial ribonucleotide reductase nrd genes and operons by binding to NrdR-boxes. The protein is Transcriptional repressor NrdR of Deinococcus deserti (strain DSM 17065 / CIP 109153 / LMG 22923 / VCD115).